We begin with the raw amino-acid sequence, 817 residues long: LisH domain-containing protein ARMC9 (817 aa).

The 33-residue stretch at 15-47 folds into the LisH domain; sequence SESDLLSMISEYLKFGEFEETARTFEKEVKRKG. 3 disordered regions span residues 580 to 605, 610 to 629, and 642 to 817; these read SATI…EEDV, LDKE…ESLL, and KTKR…SNRK. Positions 586 to 605 are enriched in acidic residues; sequence QEPESDDEEDEDDDDDEEDV. 2 stretches are compositionally biased toward polar residues: residues 692-715 and 740-750; these read SSRP…TLAT and GQTTNSVQSYS. Positions 805 to 817 are enriched in low complexity; the sequence is GRPSQQSSQSNRK.

As to expression, expressed in multiple CNS regions, including the cerebellum, all periventricular regions, and all layers of the retina.

The protein localises to the cytoplasm. It is found in the cytoskeleton. Its subcellular location is the cilium basal body. It localises to the cell projection. The protein resides in the cilium. The protein localises to the microtubule organizing center. It is found in the centrosome. Its subcellular location is the centriole. Functionally, involved in ciliogenesis. It is required for appropriate acetylation and polyglutamylation of ciliary microtubules, and regulation of cilium length. Acts as a positive regulator of hedgehog (Hh) signaling. This is LisH domain-containing protein ARMC9 (armc9) from Danio rerio (Zebrafish).